The following is a 93-amino-acid chain: UPF0175 protein AF_0100 (93 aa).

Belongs to the UPF0175 family.

The sequence is that of UPF0175 protein AF_0100 from Archaeoglobus fulgidus (strain ATCC 49558 / DSM 4304 / JCM 9628 / NBRC 100126 / VC-16).